The chain runs to 92 residues: Small ribosomal subunit protein bS18 (92 aa).

The segment at 1–27 is disordered; that stretch reads MTQQSNSADRKPRGKGPKRPRKPKVDP. The segment covering 12 to 22 has biased composition (basic residues); that stretch reads PRGKGPKRPRK.

This sequence belongs to the bacterial ribosomal protein bS18 family. In terms of assembly, part of the 30S ribosomal subunit. Forms a tight heterodimer with protein bS6.

Its function is as follows. Binds as a heterodimer with protein bS6 to the central domain of the 16S rRNA, where it helps stabilize the platform of the 30S subunit. This is Small ribosomal subunit protein bS18 from Deinococcus deserti (strain DSM 17065 / CIP 109153 / LMG 22923 / VCD115).